Reading from the N-terminus, the 395-residue chain is Imidazolonepropionase (395 aa).

Residues H72 and H74 each contribute to the Fe(3+) site. Residues H72 and H74 each contribute to the Zn(2+) site. 4-imidazolone-5-propanoate is bound by residues R81, Y144, and H174. Residue Y144 participates in N-formimidoyl-L-glutamate binding. Residue H231 coordinates Fe(3+). Zn(2+) is bound at residue H231. E234 contacts 4-imidazolone-5-propanoate. A Fe(3+)-binding site is contributed by D306. A Zn(2+)-binding site is contributed by D306.

Belongs to the metallo-dependent hydrolases superfamily. HutI family. Zn(2+) is required as a cofactor. The cofactor is Fe(3+).

The protein resides in the cytoplasm. It carries out the reaction 4-imidazolone-5-propanoate + H2O = N-formimidoyl-L-glutamate. The protein operates within amino-acid degradation; L-histidine degradation into L-glutamate; N-formimidoyl-L-glutamate from L-histidine: step 3/3. Its function is as follows. Catalyzes the hydrolytic cleavage of the carbon-nitrogen bond in imidazolone-5-propanoate to yield N-formimidoyl-L-glutamate. It is the third step in the universal histidine degradation pathway. This is Imidazolonepropionase from Pyrobaculum arsenaticum (strain DSM 13514 / JCM 11321 / PZ6).